A 106-amino-acid chain; its full sequence is Small ribosomal subunit protein bS20 (106 aa).

Basic residues predominate over residues 1 to 32; the sequence is MAQKKPKRNLSALKRHRQSLKRRLRNKAKKSA. Positions 1–33 are disordered; sequence MAQKKPKRNLSALKRHRQSLKRRLRNKAKKSAI.

This sequence belongs to the bacterial ribosomal protein bS20 family.

Its function is as follows. Binds directly to 16S ribosomal RNA. The protein is Small ribosomal subunit protein bS20 (rpsT) of Thermus thermophilus (strain ATCC BAA-163 / DSM 7039 / HB27).